The chain runs to 385 residues: MATYKPLEYLEHLKKIVPDLSDQINNIKDTYENKLWHQLTKQIEMIIISPQLLEKKELFNFYTNFIRDFENKLRPLSLVEICIAVARQFDTDESRKFIETISQKVKKDKSAYILTLSYIANMNLRSGVAEQLQDCKKTLELAKEELQGVTGLDTIVYSSFYRVSTDYHMAKSQASEFYKNALMYLSYCKLETISQEEQASLAYNLCIAALVGENVYGFGDLIANPILKALEGSQHNWLIAFLKAFNIGDIQQFEGLMSQHRDIISTQTAITNNMQKLRQKISILSLLELAFRTPSDKRSISFSKIAQATKLPLGEIEHLLMKSLSLNLIKGSIDQTVEIIHITWVTPRILDLNQINSMNNRIAEWTEKAKTSLRLVEDDTVDLVA.

The region spanning 176–347 is the PCI domain; that stretch reads EFYKNALMYL…EIIHITWVTP (172 aa).

This sequence belongs to the proteasome subunit S11 family.

Functionally, acts as a regulatory subunit of the 26S proteasome which is involved in the ATP-dependent degradation of ubiquitinated proteins. This is 26S proteasome non-ATPase regulatory subunit 13 (psmD13) from Dictyostelium discoideum (Social amoeba).